A 183-amino-acid polypeptide reads, in one-letter code: MRYSVIASKYVKALLIVGQKLNKIEKYGEFLSFVKNIYESFATFFNNPIVKPEQKTLVIKQAFEEVFKESPGEAFLNFINIVFENKREKFIPQMQALYKYAAIDIENKILVNVKTAVKLSDQEIKVINDFVEKYVGKTPVIEETIDESLIAGAVIEFAGKMIDVSIKGRMDKIAKEVFFLRKG.

This sequence belongs to the ATPase delta chain family. F-type ATPases have 2 components, F(1) - the catalytic core - and F(0) - the membrane proton channel. F(1) has five subunits: alpha(3), beta(3), gamma(1), delta(1), epsilon(1). F(0) has three main subunits: a(1), b(2) and c(10-14). The alpha and beta chains form an alternating ring which encloses part of the gamma chain. F(1) is attached to F(0) by a central stalk formed by the gamma and epsilon chains, while a peripheral stalk is formed by the delta and b chains.

It is found in the cell inner membrane. F(1)F(0) ATP synthase produces ATP from ADP in the presence of a proton or sodium gradient. F-type ATPases consist of two structural domains, F(1) containing the extramembraneous catalytic core and F(0) containing the membrane proton channel, linked together by a central stalk and a peripheral stalk. During catalysis, ATP synthesis in the catalytic domain of F(1) is coupled via a rotary mechanism of the central stalk subunits to proton translocation. Functionally, this protein is part of the stalk that links CF(0) to CF(1). It either transmits conformational changes from CF(0) to CF(1) or is implicated in proton conduction. The chain is ATP synthase subunit delta from Thermosipho africanus (strain TCF52B).